The sequence spans 167 residues: Small ribosomal subunit protein uS7c (167 aa).

It belongs to the universal ribosomal protein uS7 family. In terms of assembly, part of the 30S ribosomal subunit.

The protein localises to the plastid. It localises to the chloroplast. In terms of biological role, one of the primary rRNA binding proteins, it binds directly to 16S rRNA where it nucleates assembly of the head domain of the 30S subunit. The chain is Small ribosomal subunit protein uS7c (rps7) from Tetradesmus obliquus (Green alga).